Consider the following 560-residue polypeptide: MLNQRPLYIPFAGPALLETPLLNKGSAFSSEERDSFNLTGLLPHNIETIEEQSSRAYLQLRSFTSDMDKHIYLRNIQDTNETLFHHLIEQHIEEVMPLIYTPTVGQACEKFSQIYRRKRGLFISYPERHKIDDMLQNATKQNVKVIVVTDGERILGLGDQGIGGMGIPIGKLALYTACGGISPAYCLPILLDVGTNNQQLLDDPMYMGWRNPRISGDEYNEFVDLFIQAVKRRWPEVLLQFEDFAQENATPLLNKYRDQLCCFNDDIQGTAAVSVGTLIAACLNKSQKLSQQNIAFLGAGSAGCGIAEHIIRQMQREGLTEEQARRQVFMVDRYGLLTDSMTELQKFQTPLVQKESDIEHWDKSQKLGLAQVVKQARITVLFGVSGQKGLFTQEVVEALCANTEHPIVLPLSNPTSRVEATPQEVTNWSRGKAIVATGSPFPNTTFEGQSYEVSQCNNSYIFPGIGLGVLAARATGISDNMLTAASQALADISVEYEKAPGAILPPIKFIREISEKIAYAVALQAIEDKLALPVTAENLERRLKANFWLPKYRDYRRTSF.

Tyr100 serves as the catalytic Proton donor. Arg153 contributes to the NAD(+) binding site. Lys171 functions as the Proton acceptor in the catalytic mechanism. A divalent metal cation-binding residues include Glu242, Asp243, and Asp266. Residues Asp266 and Asn413 each coordinate NAD(+).

It belongs to the malic enzymes family. As to quaternary structure, homotetramer. Mg(2+) serves as cofactor. The cofactor is Mn(2+).

The enzyme catalyses (S)-malate + NAD(+) = pyruvate + CO2 + NADH. The catalysed reaction is oxaloacetate + H(+) = pyruvate + CO2. This chain is NAD-dependent malic enzyme, found in Psychrobacter cryohalolentis (strain ATCC BAA-1226 / DSM 17306 / VKM B-2378 / K5).